The primary structure comprises 856 residues: Inactive rhomboid protein 1 (856 aa).

The segment at 1–20 (MSEARRDSTSSLQRKKPPWL) is disordered. At 1–412 (MSEARRDSTS…HRPFFTYWLT (412 aa)) the chain is on the cytoplasmic side. Phosphoserine occurs at positions 76 and 176. Thr-180 and Thr-183 each carry phosphothreonine. Ser-391 is modified (phosphoserine). A helical transmembrane segment spans residues 413-433 (FVHSLVTILAVCIYGIAPVGF). The Lumenal portion of the chain corresponds to 434 to 656 (SQHETVDSVL…NPEVPDQFYR (223 aa)). Asn-584 carries an N-linked (GlcNAc...) asparagine glycan. The chain crosses the membrane as a helical span at residues 657–677 (LWLSLFLHAGILHCLVSVCFQ). At 678–692 (MTVLRDLEKLAGWHR) the chain is on the cytoplasmic side. Residues 693–713 (IAIIYLLSGVTGNLASAIFLP) traverse the membrane as a helical segment. Residues 714 to 715 (YR) lie on the Lumenal side of the membrane. Residues 716–736 (AEVGPAGSQFGILACLFVELF) traverse the membrane as a helical segment. Residues 737–747 (QSWQILARPWR) are Cytoplasmic-facing. Residues 748–768 (AFFKLLAVVLFLFAFGLLPWI) traverse the membrane as a helical segment. The Lumenal portion of the chain corresponds to 769–773 (DNFAH). A helical transmembrane segment spans residues 774–794 (ISGFVSGLFLSFAFLPYISFG). The Cytoplasmic portion of the chain corresponds to 795–804 (KFDLYRKRCQ). A helical membrane pass occupies residues 805–825 (IIIFQAVFLGLLAGLVVLFYF). Topologically, residues 826 to 856 (YPVRCEWCEFLTCIPFTDKFCEKYELDAQLH) are lumenal.

Belongs to the peptidase S54 family. As to quaternary structure, homodimer, or homooligomer. Interacts with TGFA and HBEGF. Interacts with EGF; may retain EGF in the endoplasmic reticulum and regulates its degradation through the endoplasmic reticulum-associated degradation (ERAD). Interacts (via cytoplasmic N-terminus) with FRMD8/iTAP; this interaction leads to mutual protein stabilization. Interacts with ADAM17/TACE.

It localises to the endoplasmic reticulum membrane. Its subcellular location is the golgi apparatus membrane. In terms of biological role, regulates ADAM17 protease, a sheddase of the epidermal growth factor (EGF) receptor ligands and TNF, thereby plays a role in sleep, cell survival, proliferation, migration and inflammation. Does not exhibit any protease activity on its own. This Rattus norvegicus (Rat) protein is Inactive rhomboid protein 1 (Rhbdf1).